The sequence spans 1295 residues: Protein FORGETTER 1 (1295 aa).

3 stretches are compositionally biased toward pro residues: residues 1-14 (MTQS…PLPA), 75-89 (PQQP…PPPI), and 162-177 (PPTP…PPPE). Disordered regions lie at residues 1 to 20 (MTQS…HSAA), 68 to 107 (RPQF…PAHG), 153 to 204 (LTAS…MDYR), and 626 to 688 (PEQP…NDSD). Residues 178 to 193 (EVNEEAIEVEREEDEG) are compositionally biased toward acidic residues. The Nuclear localization signal motif lies at 643-650 (RKRHSASP). The span at 669-688 (DNESDLESEADSADDSNDSD) shows a compositional bias: acidic residues. The segment at 691 to 741 (FQICQICSGEDERKKLLHCSECDKLFHPDCVVPPVIDLPSEAWICFSCKEK) adopts a PHD-type zinc-finger fold.

It belongs to the SBNO family. In terms of assembly, interacts with SWI/SNF and ISWI chromatin remodelers such as BRM, CHR11 and CHR17. Binds to histone H3.

The protein resides in the nucleus. Required for normal embryo development. Necessary to acquire heat stress (HS) memory, by modulating nucleosome occupancy and regulating heat-induced gene expression. Associates globally with the nucleosome-poor regions flanking the transcription units of expressed genes. Binds to the promoter regions, primarily to the proximal promoter just upstream of the transcriptional start sites (TSS) and somewhat more weakly to the region downstream of the transcription termination site (TTS), of actively expressed genes (e.g. HSA32, HSP18.2 and HSP22.0) in a heat-dependent fashion. The protein is Protein FORGETTER 1 of Arabidopsis thaliana (Mouse-ear cress).